The chain runs to 182 residues: Inosine/xanthosine triphosphatase (182 aa).

Residues D38 and E68 each contribute to the Mg(2+) site. 68–69 contributes to the substrate binding site; that stretch reads EA.

This sequence belongs to the YjjX NTPase family. As to quaternary structure, homodimer. Requires Mg(2+) as cofactor. It depends on Mn(2+) as a cofactor.

It carries out the reaction XTP + H2O = XDP + phosphate + H(+). The enzyme catalyses ITP + H2O = IDP + phosphate + H(+). In terms of biological role, phosphatase that hydrolyzes non-canonical purine nucleotides such as XTP and ITP to their respective diphosphate derivatives. Probably excludes non-canonical purines from DNA/RNA precursor pool, thus preventing their incorporation into DNA/RNA and avoiding chromosomal lesions. The polypeptide is Inosine/xanthosine triphosphatase (Erwinia tasmaniensis (strain DSM 17950 / CFBP 7177 / CIP 109463 / NCPPB 4357 / Et1/99)).